A 127-amino-acid polypeptide reads, in one-letter code: Fluoride-specific ion channel FluC (127 aa).

Transmembrane regions (helical) follow at residues 4-24 (LLLA…FLSM), 35-55 (LGTL…LAWF), 71-91 (TGFC…VFLL), and 103-123 (IAVN…LFSA). Na(+) is bound by residues Gly75 and Thr78.

This sequence belongs to the fluoride channel Fluc/FEX (TC 1.A.43) family.

It localises to the cell inner membrane. The catalysed reaction is fluoride(in) = fluoride(out). Na(+) is not transported, but it plays an essential structural role and its presence is essential for fluoride channel function. In terms of biological role, fluoride-specific ion channel. Important for reducing fluoride concentration in the cell, thus reducing its toxicity. In Enterobacter sp. (strain 638), this protein is Fluoride-specific ion channel FluC.